The sequence spans 357 residues: DNA integrity scanning protein DisA (357 aa).

The 139-residue stretch at 8–146 (VKSMINILQL…GNLRYTLKDI (139 aa)) folds into the DAC domain. ATP is bound by residues glycine 75, leucine 93, and 106–110 (MRHRT).

It belongs to the DisA family. In terms of assembly, homooctamer. Mg(2+) serves as cofactor.

It catalyses the reaction 2 ATP = 3',3'-c-di-AMP + 2 diphosphate. Its function is as follows. Participates in a DNA-damage check-point that is active prior to asymmetric division when DNA is damaged. DisA forms globular foci that rapidly scan along the chromosomes during sporulation, searching for lesions. When a lesion is present, DisA pauses at the lesion site. This triggers a cellular response that culminates in a temporary block in sporulation initiation. Also has diadenylate cyclase activity, catalyzing the condensation of 2 ATP molecules into cyclic di-AMP (c-di-AMP). c-di-AMP acts as a signaling molecule that couples DNA integrity with progression of sporulation. The rise in c-di-AMP level generated by DisA while scanning the chromosome, operates as a positive signal that advances sporulation; upon encountering a lesion, the DisA focus arrests at the damaged site and halts c-di-AMP synthesis. In Bacillus cereus (strain G9842), this protein is DNA integrity scanning protein DisA.